Here is a 270-residue protein sequence, read N- to C-terminus: Putative pyruvate, phosphate dikinase regulatory protein (270 aa).

Position 148-155 (148-155) interacts with ADP; sequence GVSRTSKT.

It belongs to the pyruvate, phosphate/water dikinase regulatory protein family. PDRP subfamily.

The enzyme catalyses N(tele)-phospho-L-histidyl/L-threonyl-[pyruvate, phosphate dikinase] + ADP = N(tele)-phospho-L-histidyl/O-phospho-L-threonyl-[pyruvate, phosphate dikinase] + AMP + H(+). It carries out the reaction N(tele)-phospho-L-histidyl/O-phospho-L-threonyl-[pyruvate, phosphate dikinase] + phosphate + H(+) = N(tele)-phospho-L-histidyl/L-threonyl-[pyruvate, phosphate dikinase] + diphosphate. Functionally, bifunctional serine/threonine kinase and phosphorylase involved in the regulation of the pyruvate, phosphate dikinase (PPDK) by catalyzing its phosphorylation/dephosphorylation. The polypeptide is Putative pyruvate, phosphate dikinase regulatory protein (Bacillus cytotoxicus (strain DSM 22905 / CIP 110041 / 391-98 / NVH 391-98)).